Reading from the N-terminus, the 160-residue chain is Putative antiporter subunit mnhE2 (160 aa).

3 consecutive transmembrane segments (helical) span residues 22 to 42, 55 to 75, and 100 to 120; these read HFKF…IYIL, IWVA…SSIS, and SDWS…STVI.

Belongs to the CPA3 antiporters (TC 2.A.63) subunit E family. In terms of assembly, may form a heterooligomeric complex that consists of seven subunits: mnhA2, mnhB2, mnhC2, mnhD2, mnhE2, mnhF2 and mnhG2.

Its subcellular location is the cell membrane. This chain is Putative antiporter subunit mnhE2 (mnhE2), found in Staphylococcus aureus (strain USA300).